A 98-amino-acid chain; its full sequence is NADH-ubiquinone oxidoreductase chain 4L (98 aa).

Transmembrane regions (helical) follow at residues 1 to 21, 29 to 49, and 61 to 81; these read MTLV…GLLM, SLLC…VTIL, and IILL…LVMV.

The protein belongs to the complex I subunit 4L family. As to quaternary structure, core subunit of respiratory chain NADH dehydrogenase (Complex I) which is composed of 45 different subunits.

Its subcellular location is the mitochondrion inner membrane. It carries out the reaction a ubiquinone + NADH + 5 H(+)(in) = a ubiquinol + NAD(+) + 4 H(+)(out). Its function is as follows. Core subunit of the mitochondrial membrane respiratory chain NADH dehydrogenase (Complex I) which catalyzes electron transfer from NADH through the respiratory chain, using ubiquinone as an electron acceptor. Part of the enzyme membrane arm which is embedded in the lipid bilayer and involved in proton translocation. The chain is NADH-ubiquinone oxidoreductase chain 4L (MT-ND4L) from Rousettus aegyptiacus (Egyptian fruit bat).